A 348-amino-acid polypeptide reads, in one-letter code: tRNA pseudouridine synthase D (348 aa).

The active-site Nucleophile is D78. Positions 150-304 (GLPNFFGPQR…AEGTRRAARL (155 aa)) constitute a TRUD domain.

This sequence belongs to the pseudouridine synthase TruD family.

The enzyme catalyses uridine(13) in tRNA = pseudouridine(13) in tRNA. Functionally, responsible for synthesis of pseudouridine from uracil-13 in transfer RNAs. The protein is tRNA pseudouridine synthase D of Anaeromyxobacter dehalogenans (strain 2CP-1 / ATCC BAA-258).